Reading from the N-terminus, the 379-residue chain is MKILRKNHPLLKIVNHSFIDLPTPSNISSWWNFGSLLGMCLIIQILTGLFLAMHYTSDTTTAFSSVAHICRDVNYGWLIRYLHANGASMFFICLFIHVGRGIYYGSYVLSETWNIGIILFLTTMATAFVGYVLPWGQMSFWGATVITNLLSAIPYIGGTLFEWIWGGFSVDKATLARFFAFHFILPFIIAAFALVHLLFLHETGSNNPSGLNSDSDKIPFHPYYTTKDLLGIFLLLLVLMILVLFFPDILGDPDNFTPANPLNTPAHIKPEWYFLFAYAILRSIPNKLGGVLALVLSILILAAFPLLNTSKQHGLIFRPVTQVIYWIFIANLLVLTWIGGQPVEYPFTTIGQIASITYFAIIIILIPVSNTIENNIIKL.

The next 4 membrane-spanning stretches (helical) occupy residues 33-53, 77-98, 113-133, and 178-198; these read FGSL…FLAM, WLIR…FIHV, WNIG…GYVL, and FFAF…VHLL. Positions 83 and 97 each coordinate heme b. Residues His182 and His196 each contribute to the heme b site. His201 provides a ligand contact to a ubiquinone. Helical transmembrane passes span 226-246, 288-308, 320-340, and 347-367; these read TKDL…VLFF, LGGV…PLLN, VTQV…WIGG, and FTTI…ILIP.

The protein belongs to the cytochrome b family. The cytochrome bc1 complex contains 11 subunits: 3 respiratory subunits (MT-CYB, CYC1 and UQCRFS1), 2 core proteins (UQCRC1 and UQCRC2) and 6 low-molecular weight proteins (UQCRH/QCR6, UQCRB/QCR7, UQCRQ/QCR8, UQCR10/QCR9, UQCR11/QCR10 and a cleavage product of UQCRFS1). This cytochrome bc1 complex then forms a dimer. It depends on heme b as a cofactor.

The protein resides in the mitochondrion inner membrane. Functionally, component of the ubiquinol-cytochrome c reductase complex (complex III or cytochrome b-c1 complex) that is part of the mitochondrial respiratory chain. The b-c1 complex mediates electron transfer from ubiquinol to cytochrome c. Contributes to the generation of a proton gradient across the mitochondrial membrane that is then used for ATP synthesis. This chain is Cytochrome b (MT-CYB), found in Akodon cursor (Cursor grass mouse).